A 21-amino-acid polypeptide reads, in one-letter code: Nigrocin-2JDa (21 aa).

C15 and C21 are disulfide-bonded.

In terms of tissue distribution, expressed by the skin glands.

The protein localises to the secreted. Functionally, has antibacterial activity against E.coli ATCC 25992 (MIC=16 uM), E.coli CIB 84492 (MIC=16 uM), S.aureus ATCC 25923 (MIC=16 uM) and S.aureus CIB 85462 (MIC=8 uM). Has antifungal activity against C.albicans (MIC=63 uM). Has hemolytic activity against rabbit erythrocytes. This is Nigrocin-2JDa from Odorrana jingdongensis (Jingdong frog).